The sequence spans 275 residues: Phosphate import ATP-binding protein PstB 1 (275 aa).

The region spanning 22-261 is the ABC transporter domain; sequence LETQAVSVYY…NRTEKIFNSP (240 aa). 54–61 provides a ligand contact to ATP; it reads GPSGCGKS.

It belongs to the ABC transporter superfamily. Phosphate importer (TC 3.A.1.7) family. In terms of assembly, the complex is composed of two ATP-binding proteins (PstB), two transmembrane proteins (PstC and PstA) and a solute-binding protein (PstS).

The protein resides in the cell inner membrane. It carries out the reaction phosphate(out) + ATP + H2O = ADP + 2 phosphate(in) + H(+). Part of the ABC transporter complex PstSACB involved in phosphate import. Responsible for energy coupling to the transport system. The protein is Phosphate import ATP-binding protein PstB 1 of Synechococcus sp. (strain JA-2-3B'a(2-13)) (Cyanobacteria bacterium Yellowstone B-Prime).